We begin with the raw amino-acid sequence, 359 residues long: Type-1 angiotensin II receptor (359 aa).

Topologically, residues 1–25 are extracellular; the sequence is MILNSSTEDGIKRIQDDCPKAGRHN. Asn4 carries N-linked (GlcNAc...) (complex) asparagine glycosylation. Angiotensin II is bound by residues Gln15 and Asp17. 2 disulfides stabilise this stretch: Cys18–Cys274 and Cys101–Cys180. A helical transmembrane segment spans residues 26 to 55; it reads YIFVMIPTLYSIIFVVGIFGNSLVVIVIYF. At 56–61 the chain is on the cytoplasmic side; the sequence is YMKLKT. A helical transmembrane segment spans residues 62–89; the sequence is VASVFLLNLALADLCFLLTLPLWAVYTA. Residues 90-98 are Extracellular-facing; the sequence is MEYRWPFGN. Residues 99 to 125 form a helical membrane-spanning segment; that stretch reads YLCKIASASVSFNLYASVFLLTCLSID. Over 126–141 the chain is Cytoplasmic; the sequence is RYLAIVHPMKSRLRRT. The helical transmembrane segment at 142-165 threads the bilayer; sequence MLVAKVTCIIIWLLAGLASLPAII. Over 166–190 the chain is Extracellular; the sequence is HRNVFFIENTNITVCAFHYESQNST. Residue Arg167 participates in angiotensin II binding. N-linked (GlcNAc...) asparagine glycosylation is present at Asn176. Residues Phe182, His183, and Tyr184 each contribute to the angiotensin II site. A glycan (N-linked (GlcNAc...) asparagine) is linked at Asn188. A helical membrane pass occupies residues 191 to 216; that stretch reads LPIGLGLTKNILGFLFPFLIILTSYT. An angiotensin II-binding site is contributed by Lys199. Residues 217–239 are Cytoplasmic-facing; that stretch reads LIWKALKKAYEIQKNKPRNDDIF. Residues 240-268 form a helical membrane-spanning segment; that stretch reads KIIMAIVLFFFFSWIPHQIFTFLDVLIQL. The Extracellular portion of the chain corresponds to 269–278; it reads GIIRDCRIAD. The helical transmembrane segment at 279 to 304 threads the bilayer; sequence IVDTAMPITICIAYFNNCLNPLFYGF. The Cytoplasmic segment spans residues 305-359; that stretch reads LGKKFKRYFLQLLKYIPPKAKSHSNLSTKMSTLSYRPSDNVSSSTKKPAPCFEVE. Residues 335–350 are compositionally biased toward polar residues; it reads STLSYRPSDNVSSSTK. Positions 335–359 are disordered; that stretch reads STLSYRPSDNVSSSTKKPAPCFEVE. Cys355 is lipidated: S-palmitoyl cysteine.

This sequence belongs to the G-protein coupled receptor 1 family. Interacts with MAS1. Interacts with ARRB1. Interacts with FLNA (via filamin repeat 21); increases PKA-mediated phosphorylation of FLNA. C-terminal Ser or Thr residues may be phosphorylated. In terms of tissue distribution, liver, lung, adrenal and adrenocortical adenomas.

It is found in the cell membrane. With respect to regulation, strongly inhibited by anti-hypertensive drugs losartan, candesartan, valsartan, irbesartan, telmisartan, eprosartan, olmesartan and azilsartan, most of which share a common biphenyl-tetrazole scaffold. Functionally, receptor for angiotensin II, a vasoconstricting peptide, which acts as a key regulator of blood pressure and sodium retention by the kidney. The activated receptor in turn couples to G-alpha proteins G(q) (GNAQ, GNA11, GNA14 or GNA15) and thus activates phospholipase C and increases the cytosolic Ca(2+) concentrations, which in turn triggers cellular responses such as stimulation of protein kinase C. In terms of biological role, (Microbial infection) During SARS coronavirus-2/SARS-CoV-2 infection, it is able to recognize and internalize the complex formed by secreted ACE2 and SARS-CoV-2 spike protein through DNM2/dynamin 2-dependent endocytosis. This chain is Type-1 angiotensin II receptor, found in Homo sapiens (Human).